Consider the following 412-residue polypeptide: Argininosuccinate synthase (412 aa).

8–16 (AYSGGLDTS) provides a ligand contact to ATP. Tyrosine 87 serves as a coordination point for L-citrulline. Glycine 117 contributes to the ATP binding site. Threonine 119, asparagine 123, and aspartate 124 together coordinate L-aspartate. An L-citrulline-binding site is contributed by asparagine 123. Arginine 127, serine 175, glutamate 259, and tyrosine 271 together coordinate L-citrulline.

The protein belongs to the argininosuccinate synthase family. Type 1 subfamily. In terms of assembly, homotetramer.

It is found in the cytoplasm. The catalysed reaction is L-citrulline + L-aspartate + ATP = 2-(N(omega)-L-arginino)succinate + AMP + diphosphate + H(+). It participates in amino-acid biosynthesis; L-arginine biosynthesis; L-arginine from L-ornithine and carbamoyl phosphate: step 2/3. The polypeptide is Argininosuccinate synthase (Clavibacter michiganensis subsp. michiganensis (strain NCPPB 382)).